A 486-amino-acid chain; its full sequence is Aspartyl/glutamyl-tRNA(Asn/Gln) amidotransferase subunit B (486 aa).

Belongs to the GatB/GatE family. GatB subfamily. Heterotrimer of A, B and C subunits.

The enzyme catalyses L-glutamyl-tRNA(Gln) + L-glutamine + ATP + H2O = L-glutaminyl-tRNA(Gln) + L-glutamate + ADP + phosphate + H(+). The catalysed reaction is L-aspartyl-tRNA(Asn) + L-glutamine + ATP + H2O = L-asparaginyl-tRNA(Asn) + L-glutamate + ADP + phosphate + 2 H(+). In terms of biological role, allows the formation of correctly charged Asn-tRNA(Asn) or Gln-tRNA(Gln) through the transamidation of misacylated Asp-tRNA(Asn) or Glu-tRNA(Gln) in organisms which lack either or both of asparaginyl-tRNA or glutaminyl-tRNA synthetases. The reaction takes place in the presence of glutamine and ATP through an activated phospho-Asp-tRNA(Asn) or phospho-Glu-tRNA(Gln). The chain is Aspartyl/glutamyl-tRNA(Asn/Gln) amidotransferase subunit B from Leptospira interrogans serogroup Icterohaemorrhagiae serovar Lai (strain 56601).